Consider the following 583-residue polypeptide: Interactor of constitutive active ROPs 2, chloroplastic (583 aa).

Residues 1–55 constitute a chloroplast transit peptide; sequence MQTPKPRPGSLEVPQKKSPASTPKTARKLKTSESDPVSSPNTKIRTPKTQSPKVV. Disordered stretches follow at residues 1 to 80 and 101 to 125; these read MQTP…PELA and EALKKEAQDQAEETKQQLMEINASE. The span at 34 to 52 shows a compositional bias: polar residues; sequence SDPVSSPNTKIRTPKTQSP. Coiled coils occupy residues 74–207 and 238–516; these read GKTP…DAKE and MKMS…AAAT. Residues 102–115 show a composition bias toward basic and acidic residues; that stretch reads ALKKEAQDQAEETK. The tract at residues 518–583 is disordered; the sequence is LSGGNNNNNS…IGVLLKKSQK (66 aa). A compositionally biased stretch (low complexity) spans 519-529; sequence SGGNNNNNSNG. Ser540 carries the post-translational modification Phosphoserine.

It belongs to the ICR family. In terms of assembly, interacts with ARAC8, ARAC11 and KIN13A in vitro, but not with ICR1 or SEC3A.

Its subcellular location is the plastid. It localises to the chloroplast. In terms of biological role, acts as a scaffold, mediating interaction of ROPs with different proteins. The sequence is that of Interactor of constitutive active ROPs 2, chloroplastic (ICR2) from Arabidopsis thaliana (Mouse-ear cress).